A 390-amino-acid polypeptide reads, in one-letter code: Mevalonate kinase (390 aa).

ATP contacts are provided by residues lysine 16, serine 130, and 135 to 141 (GAGLGSS). Mg(2+) is bound by residues serine 141 and glutamate 193. Residue aspartate 204 is the Proton acceptor of the active site.

It belongs to the GHMP kinase family. Mevalonate kinase subfamily. Mg(2+) serves as cofactor.

The protein resides in the cytoplasm. It carries out the reaction (R)-mevalonate + ATP = (R)-5-phosphomevalonate + ADP + H(+). It functions in the pathway isoprenoid biosynthesis; isopentenyl diphosphate biosynthesis via mevalonate pathway; isopentenyl diphosphate from (R)-mevalonate: step 1/3. Its function is as follows. Catalyzes the phosphorylation of mevalonate to mevalonate 5-phosphate, a key step in isoprenoid biosynthesis. The protein is Mevalonate kinase of Dictyostelium discoideum (Social amoeba).